The sequence spans 385 residues: MKDSFLFTSESVTEGHPDKMADQISDAVLDYIIERDQKAKVACETLVSNGFCMITGELKTSVYAPMQEIAREVVKKIGYTDALYGFDYRSAAVLNGVGEQSPDINQGVDREDGEIGAGDQGLMFGYACKETETLMPLPIHLAHQLTFALAQKRKDNTLPFLRPDGKSQVSVRYENNKPVSIDTIVISTQHSPEVSQKHLKEAVIEEIVYKILPKEYLHDNIKFFVNPTGKFVIGGPQGDAGLTGRKIIVDTYGGSCPHGGGAFSGKDPSKVDRSAAYAARYVAKNLVASGVCDKATVQLAYAIGVIEPVSIYVNTHNTSKYSSTELEKCVKSVFKLTPKGIIESLDLLRPIYSLTSAYGHFGRELEEFTWEKTNKAEEIKAFFKR.

Position 16 (His16) interacts with ATP. Position 18 (Asp18) interacts with Mg(2+). Residue Glu44 coordinates K(+). The L-methionine site is built by Glu57 and Gln100. Residues 100–110 are flexible loop; sequence QSPDINQGVDR. Residues 164–166, 230–231, Asp239, 245–246, Ala262, and Lys266 each bind ATP; these read DGK, KF, and RK. Asp239 contacts L-methionine. Lys270 is an L-methionine binding site.

Belongs to the AdoMet synthase family. Homotetramer; dimer of dimers. Requires Mg(2+) as cofactor. The cofactor is K(+).

It localises to the cytoplasm. The catalysed reaction is L-methionine + ATP + H2O = S-adenosyl-L-methionine + phosphate + diphosphate. Its pathway is amino-acid biosynthesis; S-adenosyl-L-methionine biosynthesis; S-adenosyl-L-methionine from L-methionine: step 1/1. In terms of biological role, catalyzes the formation of S-adenosylmethionine (AdoMet) from methionine and ATP. The overall synthetic reaction is composed of two sequential steps, AdoMet formation and the subsequent tripolyphosphate hydrolysis which occurs prior to release of AdoMet from the enzyme. This chain is S-adenosylmethionine synthase, found in Helicobacter pylori (strain P12).